We begin with the raw amino-acid sequence, 805 residues long: Probable exo-1,4-beta-xylosidase xlnD (805 aa).

An N-terminal signal peptide occupies residues 1–17 (MAVAALALLALLPQALG). 5 N-linked (GlcNAc...) asparagine glycosylation sites follow: Asn20, Asn115, Asn140, Asn235, and Asn244. Residue Asp308 is part of the active site. N-linked (GlcNAc...) asparagine glycosylation is found at Asn350, Asn383, Asn405, Asn434, Asn445, Asn486, Asn490, Asn622, Asn653, Asn667, Asn689, and Asn711.

It belongs to the glycosyl hydrolase 3 family.

The protein localises to the secreted. It carries out the reaction Hydrolysis of (1-&gt;4)-beta-D-xylans, to remove successive D-xylose residues from the non-reducing termini.. The protein operates within glycan degradation; xylan degradation. Its function is as follows. Xylan 1,4-beta-xylosidase involved in the hydrolysis of xylan, a major structural heterogeneous polysaccharide found in plant biomass representing the second most abundant polysaccharide in the biosphere, after cellulose. The sequence is that of Probable exo-1,4-beta-xylosidase xlnD (xlnD) from Aspergillus aculeatus.